A 313-amino-acid chain; its full sequence is Cytosolic Fe-S cluster assembly factor NUBP1 homolog (313 aa).

Residues 1 to 25 (MSDVPDDANAGCPGTGSAGAGKASG) form a disordered region. The [4Fe-4S] cluster site is built by Cys12, Cys26, Cys29, and Cys35. 66–73 (GKGGVGKS) is an ATP binding site. Residues Cys240 and Cys243 each coordinate [4Fe-4S] cluster.

This sequence belongs to the Mrp/NBP35 ATP-binding proteins family. NUBP1/NBP35 subfamily. As to quaternary structure, heterotetramer of 2 NUBP1 and 2 NUBP2 chains. [4Fe-4S] cluster serves as cofactor. Expressed in head amphid and labial ciliated sensory neurons and tail phasmid ciliated chemosensory neurons.

It localises to the cytoplasm. The protein localises to the cell projection. Its function is as follows. Component of the cytosolic iron-sulfur (Fe/S) protein assembly (CIA) machinery. Required for maturation of extramitochondrial Fe-S proteins. The NUBP1-NUBP2 heterotetramer forms a Fe-S scaffold complex, mediating the de novo assembly of an Fe-S cluster and its transfer to target apoproteins. Regulates cilium formation and structure. This Caenorhabditis elegans protein is Cytosolic Fe-S cluster assembly factor NUBP1 homolog.